A 295-amino-acid chain; its full sequence is Pyridoxal 5'-phosphate synthase subunit PdxS (295 aa).

Residue aspartate 25 participates in D-ribose 5-phosphate binding. Lysine 82 (schiff-base intermediate with D-ribose 5-phosphate) is an active-site residue. D-ribose 5-phosphate is bound at residue glycine 154. Arginine 166 lines the D-glyceraldehyde 3-phosphate pocket. Residues glycine 215 and 236–237 (GS) each bind D-ribose 5-phosphate.

Belongs to the PdxS/SNZ family. In terms of assembly, in the presence of PdxT, forms a dodecamer of heterodimers.

It catalyses the reaction aldehydo-D-ribose 5-phosphate + D-glyceraldehyde 3-phosphate + L-glutamine = pyridoxal 5'-phosphate + L-glutamate + phosphate + 3 H2O + H(+). Its pathway is cofactor biosynthesis; pyridoxal 5'-phosphate biosynthesis. Its function is as follows. Catalyzes the formation of pyridoxal 5'-phosphate from ribose 5-phosphate (RBP), glyceraldehyde 3-phosphate (G3P) and ammonia. The ammonia is provided by the PdxT subunit. Can also use ribulose 5-phosphate and dihydroxyacetone phosphate as substrates, resulting from enzyme-catalyzed isomerization of RBP and G3P, respectively. This Bacillus cereus (strain G9842) protein is Pyridoxal 5'-phosphate synthase subunit PdxS.